Reading from the N-terminus, the 110-residue chain is Ig kappa chain V region 2717 (110 aa).

The framework-1 stretch occupies residues 1 to 23 (VEVLTQTPSPVSAAVGGTVTISC). The complementarity-determining-1 stretch occupies residues 24–36 (QSTKSIYBBBYLA). Residues 37-51 (WYQZKPGQPPKALIY) form a framework-2 region. Residues 52 to 58 (TASSLAS) form a complementarity-determining-2 region. Positions 59–90 (GVPSRFTGSGSGTZFTLTLSDVZCDDAATYYC) are framework-3. A complementarity-determining-3 region spans residues 91–99 (GGADYTGYS). The tract at residues 100-109 (FGGGTEVVVK) is framework-4.

This is Ig kappa chain V region 2717 from Oryctolagus cuniculus (Rabbit).